The primary structure comprises 159 residues: MNHLNNIINRIFSQDKNKAEKISRYLTTMIDQDYITDDDENILYQFSQEFNNMSDNLFEFIGNVVNQNIVFNVPQLSIYLSEDKIDVPCSRLNTYLKCYWHKITYKSGLLREKVWVPIKDFSGNIIIERANVISYQKEDLPYLLIYISRYLKTIDYRTS.

It belongs to the mimivirus L761/L899 family.

This is an uncharacterized protein from Acanthamoeba polyphaga mimivirus (APMV).